Reading from the N-terminus, the 160-residue chain is Calcium-binding protein CP1 (160 aa).

EF-hand domains lie at 22-49 (AFEI…IPSG), 52-87 (NDET…TPFS), and 93-128 (GDDG…AGLA). Positions 27, 29, 31, 33, 38, 65, 67, 69, 76, 106, 108, 110, 112, and 117 each coordinate Ca(2+).

Expressed in roots and flowers.

The protein localises to the cytoplasm. It is found in the cytosol. Functionally, binds calcium in vitro. This Arabidopsis thaliana (Mouse-ear cress) protein is Calcium-binding protein CP1.